A 176-amino-acid polypeptide reads, in one-letter code: NAD(P)H-quinone oxidoreductase subunit J (176 aa).

This sequence belongs to the complex I 30 kDa subunit family. As to quaternary structure, NDH-1 can be composed of about 15 different subunits; different subcomplexes with different compositions have been identified which probably have different functions.

It is found in the cellular thylakoid membrane. The enzyme catalyses a plastoquinone + NADH + (n+1) H(+)(in) = a plastoquinol + NAD(+) + n H(+)(out). It catalyses the reaction a plastoquinone + NADPH + (n+1) H(+)(in) = a plastoquinol + NADP(+) + n H(+)(out). Its function is as follows. NDH-1 shuttles electrons from an unknown electron donor, via FMN and iron-sulfur (Fe-S) centers, to quinones in the respiratory and/or the photosynthetic chain. The immediate electron acceptor for the enzyme in this species is believed to be plastoquinone. Couples the redox reaction to proton translocation, and thus conserves the redox energy in a proton gradient. Cyanobacterial NDH-1 also plays a role in inorganic carbon-concentration. The polypeptide is NAD(P)H-quinone oxidoreductase subunit J (Nostoc punctiforme (strain ATCC 29133 / PCC 73102)).